Here is a 305-residue protein sequence, read N- to C-terminus: Ornithine carbamoyltransferase (305 aa).

Carbamoyl phosphate is bound by residues 50–53 (STRT), Q77, R101, and 128–131 (HPCQ). Residues N159, D222, and 226–227 (SM) contribute to the L-ornithine site. Carbamoyl phosphate-binding positions include 262 to 263 (CL) and R290.

The protein belongs to the aspartate/ornithine carbamoyltransferase superfamily. OTCase family.

The protein resides in the cytoplasm. It catalyses the reaction carbamoyl phosphate + L-ornithine = L-citrulline + phosphate + H(+). The protein operates within amino-acid biosynthesis; L-arginine biosynthesis; L-arginine from L-ornithine and carbamoyl phosphate: step 1/3. Reversibly catalyzes the transfer of the carbamoyl group from carbamoyl phosphate (CP) to the N(epsilon) atom of ornithine (ORN) to produce L-citrulline. This chain is Ornithine carbamoyltransferase, found in Synechococcus elongatus (strain ATCC 33912 / PCC 7942 / FACHB-805) (Anacystis nidulans R2).